Here is a 145-residue protein sequence, read N- to C-terminus: MLTAEEKAAVTAFWGKVKVDEVGGEALGRLLVVYPWTQRFFESFGDLSSADAVMNNPKVKAHGKKVLDSFSNGMKHLDDLKGTFAALSELHCDKLHVDPENFKLLGNVLVVVLARHFGKEFTPVLQADFQKVVVGVANALAHRYH.

A Globin domain is found at 1 to 145 (MLTAEEKAAV…VANALAHRYH (145 aa)). Residue T11 is modified to Phosphothreonine. At S43 the chain carries Phosphoserine. K58 bears the N6-acetyllysine mark. H62 contributes to the heme b binding site. At K81 the chain carries N6-acetyllysine. H91 lines the heme b pocket. The residue at position 92 (C92) is an S-nitrosocysteine.

The protein belongs to the globin family. In terms of assembly, heterotetramer of two alpha chains and two beta chains. In terms of tissue distribution, red blood cells.

In terms of biological role, involved in oxygen transport from the lung to the various peripheral tissues. This chain is Hemoglobin subunit beta (HBB), found in Bos mutus grunniens (Wild yak).